Consider the following 320-residue polypeptide: Polyprenal reductase 1 (320 aa).

The next 6 membrane-spanning stretches (helical) occupy residues 5–25 (IVWL…LPLV), 64–84 (FFGH…AATW), 143–163 (MHIL…LSLC), 200–220 (PLMK…WGWI), 243–263 (IIPY…AEIV), and 266–286 (LGLL…FGFV).

It belongs to the steroid 5-alpha reductase family. Polyprenal reductase subfamily. Expressed in roots and flowers.

The protein localises to the cell membrane. It catalyses the reaction a di-trans,poly-cis-dolichal + NADP(+) = a di-trans,poly-cis-polyprenal + NADPH + H(+). It participates in protein modification; protein glycosylation. Plays a key role in early steps of protein N-linked glycosylation by being involved in the conversion of polyprenol into dolichol. Acts as a polyprenal reductase that mediates the reduction of polyprenal into dolichal in a NADP-dependent mechanism. Dolichols are required for the synthesis of dolichol-linked monosaccharides and the oligosaccharide precursor used for N-glycosylation. Involved in the regulation of plant growth and reproductive processes. This chain is Polyprenal reductase 1, found in Arabidopsis thaliana (Mouse-ear cress).